Consider the following 615-residue polypeptide: DNA mismatch repair protein MutL (615 aa).

Positions 363-397 (FAEPAVREPVAPRYTPAPASGSRPAAPWPNAQPGY) are disordered. Residues 378–391 (PAPASGSRPAAPWP) are compositionally biased toward low complexity.

It belongs to the DNA mismatch repair MutL/HexB family.

Functionally, this protein is involved in the repair of mismatches in DNA. It is required for dam-dependent methyl-directed DNA mismatch repair. May act as a 'molecular matchmaker', a protein that promotes the formation of a stable complex between two or more DNA-binding proteins in an ATP-dependent manner without itself being part of a final effector complex. The chain is DNA mismatch repair protein MutL from Escherichia coli O157:H7 (strain EC4115 / EHEC).